We begin with the raw amino-acid sequence, 896 residues long: Protein translocase subunit SecA (896 aa).

ATP-binding positions include Gln87, 105–109 (GEGKT), and Asp507. Residues 855-879 (LSENDEASETQTFRRQEKKIGRNDP) form a disordered region. The segment covering 866 to 876 (TFRRQEKKIGR) has biased composition (basic and acidic residues). Zn(2+)-binding residues include Cys880, Cys882, Cys891, and His892.

It belongs to the SecA family. As to quaternary structure, monomer and homodimer. Part of the essential Sec protein translocation apparatus which comprises SecA, SecYEG and auxiliary proteins SecDF-YajC and YidC. The cofactor is Zn(2+).

Its subcellular location is the cell inner membrane. The protein resides in the cytoplasm. It carries out the reaction ATP + H2O + cellular proteinSide 1 = ADP + phosphate + cellular proteinSide 2.. Part of the Sec protein translocase complex. Interacts with the SecYEG preprotein conducting channel. Has a central role in coupling the hydrolysis of ATP to the transfer of proteins into and across the cell membrane, serving both as a receptor for the preprotein-SecB complex and as an ATP-driven molecular motor driving the stepwise translocation of polypeptide chains across the membrane. This is Protein translocase subunit SecA from Legionella pneumophila (strain Lens).